We begin with the raw amino-acid sequence, 180 residues long: Probable RNA 2'-phosphotransferase (180 aa).

Belongs to the KptA/TPT1 family.

Removes the 2'-phosphate from RNA via an intermediate in which the phosphate is ADP-ribosylated by NAD followed by a presumed transesterification to release the RNA and generate ADP-ribose 1''-2''-cyclic phosphate (APPR&gt;P). May function as an ADP-ribosylase. This Thermococcus kodakarensis (strain ATCC BAA-918 / JCM 12380 / KOD1) (Pyrococcus kodakaraensis (strain KOD1)) protein is Probable RNA 2'-phosphotransferase.